The chain runs to 658 residues: NUAK family SNF1-like kinase 1 (658 aa).

N-acetylmethionine is present on Met-1. The segment at 1 to 53 is disordered; that stretch reads MEGAAVSAAGDGPAVETGLPGSPLEAVAGATAAPVEPRKPHGVKRHHHKHNLK. A Phosphoserine modification is found at Ser-22. The span at 40 to 53 shows a compositional bias: basic residues; the sequence is PHGVKRHHHKHNLK. Residues 56–307 form the Protein kinase domain; sequence YELQETLGKG…IEDIANHWWV (252 aa). Residues 62-70 and Lys-85 each bind ATP; that span reads LGKGTYGKV. Asp-179 functions as the Proton acceptor in the catalytic mechanism. Thr-212 is subject to Phosphothreonine; by LKB1. 2 disordered regions span residues 353-422 and 441-568; these read LAKP…EGIV and IPLP…SYSR. Positions 378–393 are enriched in polar residues; that stretch reads FPQSGQDSVPESPSKL. Over residues 394–405 the composition is skewed to basic residues; the sequence is SSKRPKGILKKR. The GILK motif signature appears at 400–403; the sequence is GILK. Position 456 is a phosphoserine (Ser-456). Over residues 519–530 the composition is skewed to basic residues; sequence SCRRKGILKHSS. The span at 559–568 shows a compositional bias: low complexity; it reads SDGISRSYSR. Position 601 is a phosphoserine; by PKB/AKT1 (Ser-601).

Belongs to the protein kinase superfamily. CAMK Ser/Thr protein kinase family. SNF1 subfamily. In terms of assembly, interacts (via GILK motif) with PPP1CB; the interaction is direct and bridges NUAK1 and PPP1R12A. Interacts with CDKN1A. Requires Mg(2+) as cofactor. In terms of processing, phosphorylated at Thr-212 by STK11/LKB1 in complex with STE20-related adapter-alpha (STRADA) pseudo kinase and CAB39. Not dephosphorylated by the myosin PP1 complex when regulating its activity, due to the presence of PPP1R12A, which prevents myosin PP1 from dephosphorylating NUAK1. Phosphorylated by STK38L upon stimulation with IGF1. Post-translationally, ubiquitinated with 'Lys-29'- and 'Lys-33'-linked polyubiquitins which appear to impede LKB1-mediated phosphorylation. Deubiquitinated by USP9X. Expressed in the developing central nervous system, in epidermis, and some other tissues.

Its subcellular location is the nucleus. The protein localises to the cytoplasm. The catalysed reaction is L-seryl-[protein] + ATP = O-phospho-L-seryl-[protein] + ADP + H(+). The enzyme catalyses L-threonyl-[protein] + ATP = O-phospho-L-threonyl-[protein] + ADP + H(+). Activated by phosphorylation on Thr-212. Activated by phosphorylation at Ser-601 AKT1 during glucose starvation; the relevance of such activation in normal cells is however unsure. Functionally, serine/threonine-protein kinase involved in various processes such as cell adhesion, regulation of cell ploidy and senescence, cell proliferation and tumor progression. Phosphorylates ATM, CASP6, LATS1, PPP1R12A and p53/TP53. Acts as a regulator of cellular senescence and cellular ploidy by mediating phosphorylation of 'Ser-464' of LATS1, thereby controlling its stability. Controls cell adhesion by regulating activity of the myosin protein phosphatase 1 (PP1) complex. Acts by mediating phosphorylation of PPP1R12A subunit of myosin PP1: phosphorylated PPP1R12A then interacts with 14-3-3, leading to reduced dephosphorylation of myosin MLC2 by myosin PP1. May be involved in DNA damage response: phosphorylates p53/TP53 at 'Ser-15' and 'Ser-392' and is recruited to the CDKN1A/WAF1 promoter to participate in transcription activation by p53/TP53. May also act as a tumor malignancy-associated factor by promoting tumor invasion and metastasis under regulation and phosphorylation by AKT1. Suppresses Fas-induced apoptosis by mediating phosphorylation of CASP6, thereby suppressing the activation of the caspase and the subsequent cleavage of CFLAR. Regulates UV radiation-induced DNA damage response mediated by CDKN1A. In association with STK11, phosphorylates CDKN1A in response to UV radiation and contributes to its degradation which is necessary for optimal DNA repair. This is NUAK family SNF1-like kinase 1 (Nuak1) from Mus musculus (Mouse).